The sequence spans 948 residues: ATPase 2, plasma membrane-type (948 aa).

An N-acetylserine modification is found at Ser2. Residues 2–61 are Cytoplasmic-facing; sequence SSLEDIKNETVDLEKIPIEEVFQQLKCSREGLTTQEGEDRIQIFGPNKLEEKKESKLLKF. A helical transmembrane segment spans residues 62–81; that stretch reads LGFMWNPLSWVMEMAAIMAI. Over 82–93 the chain is Extracellular; sequence ALANGDGRPPDW. A helical transmembrane segment spans residues 94–114; sequence QDFVGIICLLVINSTISFIEE. The Cytoplasmic portion of the chain corresponds to 115-243; that stretch reads NNAGNAAAAL…GHFQKVLTAI (129 aa). The chain crosses the membrane as a helical span at residues 244–264; that stretch reads GNFCICSIAIGMVIEIIVMYP. At 265 to 273 the chain is on the extracellular side; the sequence is IQRRKYRDG. Residues 274–291 form a helical membrane-spanning segment; it reads IDNLLVLLIGGIPIAMPT. Residues 292–643 are Cytoplasmic-facing; sequence VLSVTMAIGS…TSRAIFQRMK (352 aa). Residue Asp329 is the 4-aspartylphosphate intermediate of the active site. Asp588 and Asp592 together coordinate Mg(2+). A helical membrane pass occupies residues 644–665; it reads NYTIYAVSITIRIVFGFMLIAL. The Extracellular portion of the chain corresponds to 666–670; that stretch reads IWEFD. Residues 671 to 693 traverse the membrane as a helical segment; it reads FSAFMVLIIAILNDGTIMTISKD. Residues 694-709 lie on the Cytoplasmic side of the membrane; that stretch reads RVKPSPTPDSWKLKEI. A helical membrane pass occupies residues 710–730; it reads FATGVVLGGYQAIMTVIFFWA. Topologically, residues 731–751 are extracellular; it reads AHKTDFFSDTFGVRSIRDNNH. The chain crosses the membrane as a helical span at residues 752 to 772; that stretch reads ELMGAVYLQVSIISQALIFVT. Residues 773–784 lie on the Cytoplasmic side of the membrane; that stretch reads RSRSWSFVERPG. Residues 785–805 traverse the membrane as a helical segment; that stretch reads ALLMIAFLIAQLIATLIAVYA. Over 806–813 the chain is Extracellular; sequence NWEFAKIR. Residues 814–834 traverse the membrane as a helical segment; the sequence is GIGWGWAGVIWLYSIVTYFPL. Topologically, residues 835–948 are cytoplasmic; that stretch reads DVFKFAIRYI…DIETPSHYTV (114 aa). Thr881 bears the Phosphothreonine mark. At Ser899 the chain carries Phosphoserine. Position 931 is a phosphoserine; by CIPK11 (Ser931). The tract at residues 946–948 is interaction with 14-3-3 proteins; the sequence is YTV. Thr947 carries the post-translational modification Phosphothreonine.

It belongs to the cation transport ATPase (P-type) (TC 3.A.3) family. Type IIIA subfamily. Binds to 14-3-3 proteins. The binding is induced by phosphorylation of Thr-947 and it activates the H(+)-ATPase. Interacts (via the R-domain) with PSY1R (via C-terminus). Part of a functional complex containing PSKR1, BAK1, CNGC17, and AHA. Interacts with CNGC17 and PSKR1. Interacts with PP2C67/PP2C-D1 at the plasma membrane. Interacts with AHA1. Phosphorylated, probably by PHOT1 and PHOT2, at C-terminal Thr-947 in guard cells in response to blue light to induce stomatal opening. Post-translationally, phosphorylation at Thr-881 by PSY1R. This phosphorylation activates proton pumping. Decreased phosphorylation in response to flg22 elicitation. In terms of processing, phosphorylation at Ser-899 is specifically induced by RALF1, thus leading to the inhibition of proton transport. Increased phosphorylation in response to flg22 elicitation. Phosphorylation of Thr-947 induces the binding to 14-3-3 proteins, but phosphorylation of Ser-931 interferes with this binding no matter whether Thr-947 is phosphorylated or not. Decreased phosphorylation in response to flg22 elicitation. Phosphorylation of Thr-947 is enhanced by the presence of brassinolide (BL) via the BRI1-BIN2 pathway and prior the trigger of hypocotyl elongation. Inactivated by PP2C67/PP2C-D1-mediated Thr-947 dephosphorylation; SAUR19 inhibits the action of PP2C67/PP2C-D1 and thus promotes the active phosphorylated form. Post-translationally, abscisic acid induces dephosphorylation of AHA2 in etiolated seedlings, suppressing ATP hydrolysis and hypocotyl elongation. In terms of tissue distribution, higher levels in roots than in shoots. Expressed in epidermal and root cortex cells, in phloem, xylem and root hairs. Detected in cotyledons, leaves, hypocotyls, roots and root hairs. Expressed in guard cells and mesophyll cells.

It localises to the cell membrane. The enzyme catalyses ATP + H2O + H(+)(in) = ADP + phosphate + 2 H(+)(out). Its activity is regulated as follows. Regulated by an auto-inhibitory C-terminal domain that can be displaced by phosphorylation of Thr-947 and the subsequent binding of 14-3-3 proteins. Negatively regulated by PKS5. PKS5 phosphorylates Ser-931, inhibiting interaction with the activating 14-3-3 protein. Positively regulated by PSY1R. PSY1R phosphorylates Thr-881, situated in the auto-inhibitory region I of the C-terminal domain, causing pump activation. Negatively regulated by the secreted peptide RALF. After specific binding to FERONIA, RALF causes phosphorylation at Ser-899, mediating the inhibition of proton transport. Activated by lysophospholipids, without the involvement of phosphorylation of Thr-947. This activation is critically dependent on the single autoinhibitory residue Leu-919. Repressed by PP2C-D phosphatases (e.g. PP2C67/PP2C-D1 and PP2C64/PP2C-D5) which dephosphorylates Thr-947. Triggered by SAUR19 via phosphorylation of the C-terminal autoinhibitory domain (e.g. Thr-947), as a result of the inhibition of PP2C67/PP2C-D1. Phosphorylation on Thr residues is repressed by tyrphostin 9, sphingosine, GW5074 and BML-265. By contrast, the fungal phytotoxin fusicoccin (FC) promotes phosphorylation of Thr-947 independently to BHP, thus leading to large stomatal opening. The plasma membrane H(+) ATPase of plants and fungi generates a proton gradient that drives the active transport of nutrients by H(+)-symport. The resulting external acidification and/or internal alkinization may mediate growth responses. Involved in maintaining the membrane potential and delta-pH, together forming the plasma membrane protonmotive force (PMF) required for root and hypocotyl elongation and root tropism. Important for root growth and development during different nitrogen regimes. Forms a functional cation-translocating unit with CNGC17 that is activated by PSKR1/BAK1 and possibly other BAK1/RLK complexes. Promotes stomatal opening in response to blue light. This Arabidopsis thaliana (Mouse-ear cress) protein is ATPase 2, plasma membrane-type.